We begin with the raw amino-acid sequence, 157 residues long: Lipoprotein signal peptidase (157 aa).

4 helical membrane-spanning segments follow: residues 10-30 (FIFIGVFLLIFGTDQAIKYAI), 36-56 (YESSIIDIVLVFNKGVAFSLL), 58-78 (FLEGSLKYLQILLILGLFIFL), and 84-104 (LFKAHTIEFGMVFGAGVSNIL). Catalysis depends on residues Asp114 and Asp131. The helical transmembrane segment at 123–143 (DFAIFNFADVMIDVGVGVLLI) threads the bilayer.

Belongs to the peptidase A8 family.

It localises to the cell inner membrane. The enzyme catalyses Release of signal peptides from bacterial membrane prolipoproteins. Hydrolyzes -Xaa-Yaa-Zaa-|-(S,diacylglyceryl)Cys-, in which Xaa is hydrophobic (preferably Leu), and Yaa (Ala or Ser) and Zaa (Gly or Ala) have small, neutral side chains.. It participates in protein modification; lipoprotein biosynthesis (signal peptide cleavage). Functionally, this protein specifically catalyzes the removal of signal peptides from prolipoproteins. In Helicobacter acinonychis (strain Sheeba), this protein is Lipoprotein signal peptidase.